A 281-amino-acid chain; its full sequence is MLDSPTLDLLDSLRRTMAEKSFLVVTGAGISTASGIPDYRDKDGVRRGAQPMMYQEFVGNPAARQRYWARAMLGWPRISASQANAAHRALAALQAENLIKGLITQNVDALHTQAGSQDVIELHGSLHRVLCLDCQQRSDRTAIQEQMLAHNLYLADVHATQAPDGDTLLDPAYEAGFKVPECPHCQGKRLKPDVVFFGENVASHTAARATLSVEQAEGLLVVGTSLMAWSAFRLCKAMAEQGKPVIAINHGKTRADELLRMKIEAPCEQVLPWLAEQLITR.

Residues 1-281 enclose the Deacetylase sirtuin-type domain; that stretch reads MLDSPTLDLL…PWLAEQLITR (281 aa). NAD(+) is bound by residues 27–47 and 105–108; these read GAGI…GVRR and QNVD. His123 acts as the Proton acceptor in catalysis. 4 residues coordinate Zn(2+): Cys131, Cys134, Cys182, and Cys185. Residues 223–225, 249–251, and Cys267 contribute to the NAD(+) site; these read GTS and NHG.

Belongs to the sirtuin family. Class II subfamily. It depends on Zn(2+) as a cofactor.

The protein localises to the cytoplasm. It catalyses the reaction N(6)-acetyl-L-lysyl-[protein] + NAD(+) + H2O = 2''-O-acetyl-ADP-D-ribose + nicotinamide + L-lysyl-[protein]. Functionally, NAD-dependent protein deacetylase which modulates the activities of several enzymes which are inactive in their acetylated form. This chain is NAD-dependent protein deacetylase 3, found in Pseudomonas syringae pv. tomato (strain ATCC BAA-871 / DC3000).